Here is a 678-residue protein sequence, read N- to C-terminus: UvrABC system protein B (678 aa).

Residues 35 to 422 (EGVSDGLMFQ…ADNVVEQVVR (388 aa)) form the Helicase ATP-binding domain. 48-55 (GVTGSGKT) is a binding site for ATP. The Beta-hairpin motif lies at 101-124 (YYDYYQPEAYVPTRDLFIEKDSSI). The 167-residue stretch at 439–605 (QVDDLLGEIH…GVSKAVRELI (167 aa)) folds into the Helicase C-terminal domain. The region spanning 633-668 (AREIRRLEKLMMDHARNLEFEQAAAARDALNALKSR) is the UVR domain.

This sequence belongs to the UvrB family. Forms a heterotetramer with UvrA during the search for lesions. Interacts with UvrC in an incision complex.

The protein resides in the cytoplasm. The UvrABC repair system catalyzes the recognition and processing of DNA lesions. A damage recognition complex composed of 2 UvrA and 2 UvrB subunits scans DNA for abnormalities. Upon binding of the UvrA(2)B(2) complex to a putative damaged site, the DNA wraps around one UvrB monomer. DNA wrap is dependent on ATP binding by UvrB and probably causes local melting of the DNA helix, facilitating insertion of UvrB beta-hairpin between the DNA strands. Then UvrB probes one DNA strand for the presence of a lesion. If a lesion is found the UvrA subunits dissociate and the UvrB-DNA preincision complex is formed. This complex is subsequently bound by UvrC and the second UvrB is released. If no lesion is found, the DNA wraps around the other UvrB subunit that will check the other stand for damage. The sequence is that of UvrABC system protein B from Bordetella pertussis (strain Tohama I / ATCC BAA-589 / NCTC 13251).